The following is a 688-amino-acid chain: Zinc finger protein 770 (688 aa).

Lys-11 participates in a covalent cross-link: Glycyl lysine isopeptide (Lys-Gly) (interchain with G-Cter in SUMO2). 3 consecutive C2H2-type zinc fingers follow at residues 27–49 (YVCN…YLIH), 55–77 (FECD…QLTH), and 81–103 (FKCS…QQLH). Residues Lys-112, Lys-121, and Lys-146 each participate in a glycyl lysine isopeptide (Lys-Gly) (interchain with G-Cter in SUMO2) cross-link. 3 consecutive C2H2-type zinc fingers follow at residues 160–182 (HACT…VLIH), 188–210 (FKCV…QLTH), and 216–238 (FQCC…KQIH). Lys-262 is covalently cross-linked (Glycyl lysine isopeptide (Lys-Gly) (interchain with G-Cter in SUMO2)). Residues 294 to 318 (FQCPKCEKCFESEQILNEHSCFPAR) form a C2H2-type 7; degenerate zinc finger. Glycyl lysine isopeptide (Lys-Gly) (interchain with G-Cter in SUMO2) cross-links involve residues Lys-420 and Lys-437. 4 consecutive C2H2-type zinc fingers follow at residues 475-497 (CPCD…YLIH), 503-525 (FGCN…EQTH), 623-645 (YRCS…YLIH), and 651-673 (FECS…QLTH). Lys-681 participates in a covalent cross-link: Glycyl lysine isopeptide (Lys-Gly) (interchain with G-Cter in SUMO2).

This sequence belongs to the krueppel C2H2-type zinc-finger protein family.

It localises to the nucleus. May be involved in transcriptional regulation. The chain is Zinc finger protein 770 (ZNF770) from Pongo abelii (Sumatran orangutan).